The following is a 289-amino-acid chain: Probable aquaporin PIP2-6 (289 aa).

Met1 is subject to N-acetylmethionine. Over 1–38 (MTKDELTEEESLSGKDYLDPPPVKTFEVRELKKWSFYR) the chain is Cytoplasmic. Thr7 bears the Phosphothreonine mark. Phosphoserine is present on Ser11. A helical transmembrane segment spans residues 39 to 59 (AVIAEFIATLLFLYVTVLTVI). The Extracellular segment spans residues 60-80 (GFKSQTDINAGGGACASVGLL). The chain crosses the membrane as a helical span at residues 81 to 101 (GISWAFGGMIFILVYCTAGIS). Residues 102–124 (GGHINPAVTFGLFLASKVSLVRA) lie on the Cytoplasmic side of the membrane. Positions 106–108 (NPA) match the NPA 1 motif. A helical membrane pass occupies residues 125-145 (VSYMVAQCLGATCGVGLVKVF). At 146–165 (QSTYYNRYGGGANMLSDGYN) the chain is on the extracellular side. Residues 166 to 186 (VGVGVGAEIIGTFVLVYTVFS) form a helical membrane-spanning segment. At 187-200 (ATDPKRNARDSHIP) the chain is on the cytoplasmic side. Residues 201-221 (VLAPLPIGFSVFMVHLATIPI) traverse the membrane as a helical segment. Topologically, residues 222–248 (TGTGINPARSFGAAVIYNNQKAWDDQW) are extracellular. Residues 227-229 (NPA) carry the NPA 2 motif. The chain crosses the membrane as a helical span at residues 249–269 (IFWVGPFVGAAIAAFYHQFVL). Residues 270-289 (RAGAMKAYGSVRSQLHELHA) lie on the Cytoplasmic side of the membrane. Phosphoserine is present on residues Ser279 and Ser282.

Belongs to the MIP/aquaporin (TC 1.A.8) family. PIP (TC 1.A.8.11) subfamily. In terms of tissue distribution, expressed above ground, and in flower buds.

It localises to the cell membrane. Its function is as follows. Aquaporins facilitate the transport of water and small neutral solutes across cell membranes. This is Probable aquaporin PIP2-6 (PIP2-6) from Arabidopsis thaliana (Mouse-ear cress).